Consider the following 186-residue polypeptide: Pyridoxal 5'-phosphate synthase subunit PdxT (186 aa).

46 to 48 (GES) provides a ligand contact to L-glutamine. The active-site Nucleophile is C78. Residues R105 and 134–135 (IR) contribute to the L-glutamine site. Catalysis depends on charge relay system residues H170 and E172.

Belongs to the glutaminase PdxT/SNO family. As to quaternary structure, in the presence of PdxS, forms a dodecamer of heterodimers. Only shows activity in the heterodimer.

It carries out the reaction aldehydo-D-ribose 5-phosphate + D-glyceraldehyde 3-phosphate + L-glutamine = pyridoxal 5'-phosphate + L-glutamate + phosphate + 3 H2O + H(+). It catalyses the reaction L-glutamine + H2O = L-glutamate + NH4(+). Its pathway is cofactor biosynthesis; pyridoxal 5'-phosphate biosynthesis. Catalyzes the hydrolysis of glutamine to glutamate and ammonia as part of the biosynthesis of pyridoxal 5'-phosphate. The resulting ammonia molecule is channeled to the active site of PdxS. In Clostridium acetobutylicum (strain ATCC 824 / DSM 792 / JCM 1419 / IAM 19013 / LMG 5710 / NBRC 13948 / NRRL B-527 / VKM B-1787 / 2291 / W), this protein is Pyridoxal 5'-phosphate synthase subunit PdxT.